Reading from the N-terminus, the 486-residue chain is Cardiolipin synthase A (486 aa).

A run of 2 helical transmembrane segments spans residues 3–23 and 38–58; these read TVYT…IAGV and MAWL…YLAV. PLD phosphodiesterase domains lie at 219-246 and 399-426; these read MDLR…VDPR and EGGL…DMRS. Catalysis depends on residues histidine 224, lysine 226, aspartate 231, histidine 404, lysine 406, and aspartate 411.

The protein belongs to the phospholipase D family. Cardiolipin synthase subfamily. ClsA sub-subfamily.

It is found in the cell inner membrane. It catalyses the reaction 2 a 1,2-diacyl-sn-glycero-3-phospho-(1'-sn-glycerol) = a cardiolipin + glycerol. Catalyzes the reversible phosphatidyl group transfer from one phosphatidylglycerol molecule to another to form cardiolipin (CL) (diphosphatidylglycerol) and glycerol. The sequence is that of Cardiolipin synthase A from Escherichia coli O157:H7 (strain EC4115 / EHEC).